A 63-amino-acid chain; its full sequence is DNA-directed RNA polymerase 7 kDa subunit (63 aa).

Belongs to the poxviridae DNA-directed RNA polymerase 7 kDa subunit family. As to quaternary structure, the DNA-dependent RNA polymerase used for intermediate and late genes expression consists of eight subunits 147 kDa, 133 kDa, 35 kDa, 30 kDa, 22 kDa, 19 kDa, 18 kDa and 7 kDa totalling more than 500 kDa in mass. The same holoenzyme, with the addition of the transcription-specificity factor RAP94, is used for early gene expression.

The protein resides in the virion. It catalyses the reaction RNA(n) + a ribonucleoside 5'-triphosphate = RNA(n+1) + diphosphate. Its function is as follows. Part of the DNA-dependent RNA polymerase which catalyzes the transcription of viral DNA into RNA using the four ribonucleoside triphosphates as substrates. Responsible for the transcription of early, intermediate and late genes. DNA-dependent RNA polymerase associates with the early transcription factor (ETF) thereby allowing the early genes transcription. Late transcription, and probably also intermediate transcription, require newly synthesized RNA polymerase. This chain is DNA-directed RNA polymerase 7 kDa subunit (RPO7), found in Homo sapiens (Human).